Reading from the N-terminus, the 136-residue chain is MALWLTVVIAFTCIGGLASPVPTPSPKALKELIEELVNITQNQKAPLCNGSMVWSINLTTSMYCAARESLINITNCSVIQRTQRMLNALCPHKLSAKVSSEHVRDTKIEVTQFIKTLLQHSRNVFHYRSFNWSKKS.

The signal sequence occupies residues 1-18 (MALWLTVVIAFTCIGGLA). Asn38, Asn49, Asn57, Asn72, Asn75, and Asn131 each carry an N-linked (GlcNAc...) asparagine glycan. Intrachain disulfides connect Cys48/Cys76 and Cys64/Cys90.

Belongs to the IL-4/IL-13 family. In terms of assembly, interacts with IL13RA2.

The protein localises to the secreted. Its function is as follows. Cytokine that plays important roles in allergic inflammation and immune response to parasite infection. Synergizes with IL2 in regulating interferon-gamma synthesis. Stimulates B-cell proliferation, and activation of eosinophils, basophils, and mast cells. Plays an important role in controlling IL33 activity by modulating the production of transmembrane and soluble forms of interleukin-1 receptor-like 1/IL1RL1. Displays the capacity to antagonize Th1-driven proinflammatory immune response and downregulates synthesis of many proinflammatory cytokines including IL1, IL6, IL10, IL12 and TNF-alpha through a mechanism that partially involves suppression of NF-kappa-B. Also functions on nonhematopoietic cells, including endothelial cells where it induces vascular cell adhesion protein 1/VCAM1, which is important in the recruitment of eosinophils. Exerts its biological effects through its receptors which comprises the IL4R chain and the IL13RA1 chain, to activate JAK1 and TYK2, leading to the activation of STAT6. Aside from IL13RA1, another receptor IL13RA2 acts as a high affinity decoy for IL13 and mediates internalization and depletion of extracellular IL13. The chain is Interleukin-13 (IL13) from Camelus bactrianus (Bactrian camel).